The primary structure comprises 210 residues: Imidazoleglycerol-phosphate dehydratase (210 aa).

This sequence belongs to the imidazoleglycerol-phosphate dehydratase family.

It is found in the cytoplasm. The enzyme catalyses D-erythro-1-(imidazol-4-yl)glycerol 3-phosphate = 3-(imidazol-4-yl)-2-oxopropyl phosphate + H2O. The protein operates within amino-acid biosynthesis; L-histidine biosynthesis; L-histidine from 5-phospho-alpha-D-ribose 1-diphosphate: step 6/9. This chain is Imidazoleglycerol-phosphate dehydratase, found in Acidovorax ebreus (strain TPSY) (Diaphorobacter sp. (strain TPSY)).